A 74-amino-acid chain; its full sequence is Conotoxin Vc6.8 (74 aa).

Residues 1–19 form the signal peptide; that stretch reads MEKLTILLLVAAVLMSTQA. Residues 20-34 constitute a propeptide that is removed on maturation; the sequence is LMQEQRQKAKINLFS. Cystine bridges form between Cys-49–Cys-62, Cys-55–Cys-66, and Cys-61–Cys-70.

It belongs to the conotoxin O2 superfamily. As to expression, expressed by the venom duct.

It is found in the secreted. Functionally, inhibits voltage-gated ion channels. The sequence is that of Conotoxin Vc6.8 from Conus victoriae (Queen Victoria cone).